The sequence spans 621 residues: Pentatricopeptide repeat-containing protein At3g48250, chloroplastic (621 aa).

Residues 1–67 constitute a chloroplast transit peptide; that stretch reads MYRSMAILSS…SKPDSMLQLV (67 aa). PPR repeat units lie at residues 122–156, 157–194, 262–296, 297–331, 332–368, 369–403, 404–438, 439–473, 474–509, and 510–544; these read STPL…GFYL, DEDT…NAMS, STVT…GYDM, DLDT…PFKP, SIQD…GKSL, SKAV…GYEP, DNIT…GCFP, DIKT…GFDI, DSNL…NVKP, and WQST…NYPA.

The protein belongs to the PPR family. P subfamily.

The protein localises to the plastid. It localises to the chloroplast. This is Pentatricopeptide repeat-containing protein At3g48250, chloroplastic from Arabidopsis thaliana (Mouse-ear cress).